The sequence spans 313 residues: Ribosomal RNA small subunit methyltransferase H (313 aa).

Residues 35 to 37 (GGH), Asp55, Phe79, Asp100, and Gln107 contribute to the S-adenosyl-L-methionine site.

The protein belongs to the methyltransferase superfamily. RsmH family.

Its subcellular location is the cytoplasm. It carries out the reaction cytidine(1402) in 16S rRNA + S-adenosyl-L-methionine = N(4)-methylcytidine(1402) in 16S rRNA + S-adenosyl-L-homocysteine + H(+). In terms of biological role, specifically methylates the N4 position of cytidine in position 1402 (C1402) of 16S rRNA. In Burkholderia multivorans (strain ATCC 17616 / 249), this protein is Ribosomal RNA small subunit methyltransferase H.